A 267-amino-acid chain; its full sequence is MFNLKKQPSDKLFVPFITAGDPLPEISIELAKSLQEAGASALELGVPYSDPLADGPVIQRASKRALDNDMNIVKAIRLGGEMKKNGVHIPIILFTYYNPVLQLDTDHFFALLRQNQLDGLLVPDLPFEESVYLQQQCKKHGITYISLVAPTSESRIQKITQQAEGFVYCVSSLGVTGVRNEFEDSVSSFIRSVKGMSSVPVAVGFGISSSKQVEMMNELADGVVVGSALVRKIEELKDELVAPETREQALKAFEAYAKTFSGSYMVK.

Residues E43 and D54 each act as proton acceptor in the active site.

It belongs to the TrpA family. In terms of assembly, tetramer of two alpha and two beta chains.

The enzyme catalyses (1S,2R)-1-C-(indol-3-yl)glycerol 3-phosphate + L-serine = D-glyceraldehyde 3-phosphate + L-tryptophan + H2O. It functions in the pathway amino-acid biosynthesis; L-tryptophan biosynthesis; L-tryptophan from chorismate: step 5/5. In terms of biological role, the alpha subunit is responsible for the aldol cleavage of indoleglycerol phosphate to indole and glyceraldehyde 3-phosphate. The protein is Tryptophan synthase alpha chain of Bacillus licheniformis (strain ATCC 14580 / DSM 13 / JCM 2505 / CCUG 7422 / NBRC 12200 / NCIMB 9375 / NCTC 10341 / NRRL NRS-1264 / Gibson 46).